Here is a 169-residue protein sequence, read N- to C-terminus: Der GTPase-activating protein YihI (169 aa).

Disordered regions lie at residues 1 to 83 (MNPL…PTKP) and 150 to 169 (DEEEREEEKQDDIMQLLKGN). Over residues 21-30 (NREELNAEGR) the composition is skewed to basic and acidic residues. Residues 31–40 (ARKREKKHRG) are compositionally biased toward basic residues. Basic and acidic residues-rich tracts occupy residues 51 to 66 (SGDKHPSGKQQRDPRL) and 150 to 161 (DEEEREEEKQDD).

It belongs to the YihI family. Interacts with Der.

Functionally, a GTPase-activating protein (GAP) that modifies Der/EngA GTPase function. May play a role in ribosome biogenesis. This chain is Der GTPase-activating protein YihI, found in Photorhabdus laumondii subsp. laumondii (strain DSM 15139 / CIP 105565 / TT01) (Photorhabdus luminescens subsp. laumondii).